Here is a 463-residue protein sequence, read N- to C-terminus: uncharacterized protein (463 aa).

12 consecutive transmembrane segments (helical) span residues 21 to 40 (DFACNLIYATVSTYLLFFYT), 50 to 72 (AGTMFLVVRIIDALADPFIGTIV), 84 to 104 (PYLLFGAFPFVILAILCFTTP), 112 to 132 (LIYAYITYVGLSLTYTTINVP), 156 to 176 (LFANLGGLVVAFFVPLLAAYL), 186 to 206 (GWQLTMGILGMIGGCLLIFCF), 237 to 257 (LVVLSIFFIIIFGVNSISNSV), 271 to 291 (LVKWYGLIGSLPALVILPFIP), 311 to 331 (IIGLLALLFVPPSNVYLILVC), 334 to 354 (IAAAGSLTAGGYMWALIPETI), 367 to 387 (GLIYAIIGFFFKFGMALGGVV), and 408 to 428 (LMGILITTTIIPVFLLVLALI).

The protein belongs to the sodium:galactoside symporter (TC 2.A.2) family.

It is found in the cell membrane. This is an uncharacterized protein from Bacillus subtilis (strain 168).